Here is a 168-residue protein sequence, read N- to C-terminus: MLVYTDLLTGDELLSDSFPYKEIENGILWEVEGKWTTKGCVEVNIGANPSAEEGGEDEGVDDSVEKVVDIVDTFRLQEQPTYDKKGFIAYIKKYIKLLTPKLTPEQQEEFKKGIEGATKFLLPKLKDFQFFVGEGMHDDSTIVFAYYKEGATNPTFLYFAHGLKEVKC.

The TCTP domain maps to 1–168; sequence MLVYTDLLTG…FAHGLKEVKC (168 aa).

It belongs to the TCTP family.

It is found in the cytoplasm. Functionally, involved in calcium binding and microtubule stabilization. This chain is Translationally-controlled tumor protein homolog (TCTP), found in Brassica oleracea (Wild cabbage).